Here is an 801-residue protein sequence, read N- to C-terminus: U-box domain-containing protein 34 (801 aa).

The tract at residues 205–309 (RSPTLPDPRQ…PETSRKSKKV (105 aa)) is disordered. The span at 236 to 254 (LTCNKPKTPQSSKASSATT) shows a compositional bias: polar residues. A compositionally biased stretch (basic and acidic residues) spans 289–309 (VSEHRDSDRSPPETSRKSKKV). A coiled-coil region spans residues 301–395 (ETSRKSKKVE…ETAKALLARE (95 aa)). The Protein kinase domain maps to 442–705 (FSPEKVIGEG…DLKSEVIPVL (264 aa)). ATP is bound by residues 448-456 (IGEGGYGKV) and lysine 469. Aspartate 564 serves as the catalytic Proton acceptor. Positions 724–797 (RAPSHYFCPI…RDWKSRVRFS (74 aa)) constitute a U-box domain.

The protein belongs to the protein kinase superfamily. Ser/Thr protein kinase family.

It catalyses the reaction L-seryl-[protein] + ATP = O-phospho-L-seryl-[protein] + ADP + H(+). The catalysed reaction is L-threonyl-[protein] + ATP = O-phospho-L-threonyl-[protein] + ADP + H(+). The enzyme catalyses S-ubiquitinyl-[E2 ubiquitin-conjugating enzyme]-L-cysteine + [acceptor protein]-L-lysine = [E2 ubiquitin-conjugating enzyme]-L-cysteine + N(6)-ubiquitinyl-[acceptor protein]-L-lysine.. It functions in the pathway protein modification; protein ubiquitination. Functions as an E3 ubiquitin ligase. The chain is U-box domain-containing protein 34 (PUB34) from Arabidopsis thaliana (Mouse-ear cress).